Consider the following 1128-residue polypeptide: Cordon-bleu protein-like 1 (1128 aa).

The tract at residues M1–S35 is disordered. A Phosphothreonine modification is found at T139. Residues S204, S222, and S256 each carry the phosphoserine modification. Disordered stretches follow at residues K249–D309, M325–S441, and T454–G499. A Phosphothreonine modification is found at T260. A compositionally biased stretch (polar residues) spans F270–P286. S273 bears the Phosphoserine mark. T284 carries the phosphothreonine modification. The KKRRAP 1 motif lies at K291–P296. Phosphoserine occurs at positions 326, 333, 344, and 356. Polar residues predominate over residues L345–L357. Residues T360–P365 carry the KKRRAP 2 motif. Residues S397–Y415 show a composition bias toward polar residues. The segment covering S416–E425 has biased composition (acidic residues). Phosphoserine occurs at positions 438, 441, 461, 471, and 474. Residues M475–E488 show a composition bias toward basic and acidic residues. Residues S563, S584, S786, S813, S814, and S821 each carry the phosphoserine modification. 4 disordered regions span residues T780–P840, S882–S964, R995–M1081, and I1103–H1128. Residues L899 to M908 show a composition bias toward basic and acidic residues. Residues S911, S917, S947, S1069, and S1070 each carry the phosphoserine modification. Composition is skewed to polar residues over residues S1045–M1081 and I1103–P1122. The region spanning M1081–V1101 is the WH2 domain. S1121 carries the phosphoserine modification.

In Homo sapiens (Human), this protein is Cordon-bleu protein-like 1.